A 492-amino-acid polypeptide reads, in one-letter code: 2,3-bisphosphoglycerate-independent phosphoglycerate mutase (492 aa).

Residues Asp11 and Ser61 each coordinate Mn(2+). Ser61 (phosphoserine intermediate) is an active-site residue. Substrate contacts are provided by residues His118, 147–148 (RD), Arg178, Arg184, 248–251 (RNDR), and Lys320. Mn(2+) contacts are provided by Asp386, His390, Asp427, His428, and His445.

This sequence belongs to the BPG-independent phosphoglycerate mutase family. Monomer. Requires Mn(2+) as cofactor.

It catalyses the reaction (2R)-2-phosphoglycerate = (2R)-3-phosphoglycerate. The protein operates within carbohydrate degradation; glycolysis; pyruvate from D-glyceraldehyde 3-phosphate: step 3/5. Catalyzes the interconversion of 2-phosphoglycerate and 3-phosphoglycerate. The protein is 2,3-bisphosphoglycerate-independent phosphoglycerate mutase of Campylobacter jejuni subsp. jejuni serotype O:6 (strain 81116 / NCTC 11828).